We begin with the raw amino-acid sequence, 156 residues long: Large ribosomal subunit protein uL22 (156 aa).

The interval 114-156 (VESRPKQEKGGKAGASKASSRAARAQGSKAAAAKKTESKGGTS) is disordered. The span at 127 to 146 (GASKASSRAARAQGSKAAAA) shows a compositional bias: low complexity. Residues 147 to 156 (KKTESKGGTS) are compositionally biased toward basic and acidic residues.

This sequence belongs to the universal ribosomal protein uL22 family. As to quaternary structure, part of the 50S ribosomal subunit.

Its function is as follows. This protein binds specifically to 23S rRNA; its binding is stimulated by other ribosomal proteins, e.g. L4, L17, and L20. It is important during the early stages of 50S assembly. It makes multiple contacts with different domains of the 23S rRNA in the assembled 50S subunit and ribosome. In terms of biological role, the globular domain of the protein is located near the polypeptide exit tunnel on the outside of the subunit, while an extended beta-hairpin is found that lines the wall of the exit tunnel in the center of the 70S ribosome. The protein is Large ribosomal subunit protein uL22 of Mycobacteroides abscessus (strain ATCC 19977 / DSM 44196 / CCUG 20993 / CIP 104536 / JCM 13569 / NCTC 13031 / TMC 1543 / L948) (Mycobacterium abscessus).